Here is a 425-residue protein sequence, read N- to C-terminus: Glutamate-1-semialdehyde 2,1-aminomutase (425 aa).

Lys-264 bears the N6-(pyridoxal phosphate)lysine mark.

This sequence belongs to the class-III pyridoxal-phosphate-dependent aminotransferase family. HemL subfamily. In terms of assembly, homodimer. Pyridoxal 5'-phosphate serves as cofactor.

Its subcellular location is the cytoplasm. The enzyme catalyses (S)-4-amino-5-oxopentanoate = 5-aminolevulinate. Its pathway is porphyrin-containing compound metabolism; protoporphyrin-IX biosynthesis; 5-aminolevulinate from L-glutamyl-tRNA(Glu): step 2/2. This is Glutamate-1-semialdehyde 2,1-aminomutase from Campylobacter lari (strain RM2100 / D67 / ATCC BAA-1060).